The following is a 1207-amino-acid chain: Protein STU1 (1207 aa).

Disordered stretches follow at residues 504–525 (EKTALEKDPNNPNASLASSQSS), 549–730 (EQRR…DEDL), 789–856 (AQSI…EGVQ), 869–928 (AVEH…LYSE), and 1086–1105 (SSTPTSSPSSKSSLTSLPGA). A compositionally biased stretch (low complexity) spans 576–594 (SASTKSLSARTASTASTAS). Composition is skewed to polar residues over residues 605 to 624 (SGESTKSALKNSSGTGSLMS), 653 to 672 (GKTTPSMTPEKTPAVTTTKK), and 684 to 710 (AQTQNSPNVSPIRSRSRLGQSTTVQKT). 2 stretches are compositionally biased toward low complexity: residues 711-724 (ASASSRQASPAPSA) and 791-806 (SIHHTPPKTHSPSHLS). Residues 869–878 (AVEHEVEKPV) show a composition bias toward basic and acidic residues. Composition is skewed to polar residues over residues 895-905 (NESISSDTVMG) and 919-928 (TSTGSVLYSE).

The protein belongs to the CLASP family. As to quaternary structure, interacts with microtubules.

The protein localises to the cytoplasm. It localises to the cytoskeleton. Its subcellular location is the nucleus. It is found in the spindle. In terms of biological role, microtubule binding protein that promotes the stabilization of dynamic microtubules. Required for mitotic spindle formation. The chain is Protein STU1 (STU1) from Phaeosphaeria nodorum (strain SN15 / ATCC MYA-4574 / FGSC 10173) (Glume blotch fungus).